We begin with the raw amino-acid sequence, 240 residues long: UDP-2,3-diacylglucosamine hydrolase (240 aa).

Asp-8, His-10, Asp-41, Asn-79, and His-114 together coordinate Mn(2+). 79 to 80 (NR) is a binding site for substrate. Residues Asp-122, Ser-160, Asn-164, Lys-167, and His-195 each contribute to the substrate site. Mn(2+)-binding residues include His-195 and His-197.

This sequence belongs to the LpxH family. Mn(2+) is required as a cofactor.

It is found in the cell inner membrane. The catalysed reaction is UDP-2-N,3-O-bis[(3R)-3-hydroxytetradecanoyl]-alpha-D-glucosamine + H2O = 2-N,3-O-bis[(3R)-3-hydroxytetradecanoyl]-alpha-D-glucosaminyl 1-phosphate + UMP + 2 H(+). It participates in glycolipid biosynthesis; lipid IV(A) biosynthesis; lipid IV(A) from (3R)-3-hydroxytetradecanoyl-[acyl-carrier-protein] and UDP-N-acetyl-alpha-D-glucosamine: step 4/6. Its function is as follows. Hydrolyzes the pyrophosphate bond of UDP-2,3-diacylglucosamine to yield 2,3-diacylglucosamine 1-phosphate (lipid X) and UMP by catalyzing the attack of water at the alpha-P atom. Involved in the biosynthesis of lipid A, a phosphorylated glycolipid that anchors the lipopolysaccharide to the outer membrane of the cell. This is UDP-2,3-diacylglucosamine hydrolase from Shigella dysenteriae serotype 1 (strain Sd197).